Reading from the N-terminus, the 420-residue chain is Serine hydroxymethyltransferase (420 aa).

Residues leucine 121 and 125 to 127 contribute to the (6S)-5,6,7,8-tetrahydrofolate site; that span reads GHL. Lysine 229 carries the post-translational modification N6-(pyridoxal phosphate)lysine.

Belongs to the SHMT family. As to quaternary structure, homodimer. Pyridoxal 5'-phosphate is required as a cofactor.

The protein localises to the cytoplasm. It catalyses the reaction (6R)-5,10-methylene-5,6,7,8-tetrahydrofolate + glycine + H2O = (6S)-5,6,7,8-tetrahydrofolate + L-serine. It functions in the pathway one-carbon metabolism; tetrahydrofolate interconversion. The protein operates within amino-acid biosynthesis; glycine biosynthesis; glycine from L-serine: step 1/1. Its function is as follows. Catalyzes the reversible interconversion of serine and glycine with tetrahydrofolate (THF) serving as the one-carbon carrier. This reaction serves as the major source of one-carbon groups required for the biosynthesis of purines, thymidylate, methionine, and other important biomolecules. Also exhibits THF-independent aldolase activity toward beta-hydroxyamino acids, producing glycine and aldehydes, via a retro-aldol mechanism. In Aggregatibacter actinomycetemcomitans (Actinobacillus actinomycetemcomitans), this protein is Serine hydroxymethyltransferase.